A 418-amino-acid chain; its full sequence is Cytochrome P450 monooxygenase ABA2 (418 aa).

Cysteine 355 provides a ligand contact to heme.

It belongs to the cytochrome P450 family. Requires heme as cofactor.

It participates in hormone biosynthesis. Cytochrome P450 monooxygenase involved in the biosynthesis of abscisic acid (ABA), a phytohormone that acts antagonistically toward salicylic acid (SA), jasmonic acid (JA) and ethylene (ETH) signaling, to impede plant defense responses. During pathogen-host interaction, ABA plays a dual role in disease severity by increasing plant susceptibility and accelerating pathogenesis in the fungus itself. The first step of the pathway catalyzes the reaction from farnesyl diphosphate to alpha-ionylideneethane performed by the alpha-ionylideneethane synthase ABA3 via a three-step reaction mechanism involving 2 neutral intermediates, beta-farnesene and allofarnesene. The cytochrome P450 monooxygenase ABA1 might then be involved in the conversion of alpha-ionylideneethane to alpha-ionylideneacetic acid. Alpha-ionylideneacetic acid is further converted to abscisic acid in 2 steps involving the cytochrome P450 monooxygenase ABA2 and the short-chain dehydrogenase/reductase ABA4, via the intermediates 1'-deoxy-ABA or 1',4'-trans-diol-ABA, depending on the order of action of these 2 enzymes. ABA2 is responsible for the hydroxylation of carbon atom C-1' and ABA4 might be involved in the oxidation of the C-4' carbon atom. This Pyricularia oryzae (strain Y34) (Rice blast fungus) protein is Cytochrome P450 monooxygenase ABA2.